The sequence spans 378 residues: Phospho-N-acetylmuramoyl-pentapeptide-transferase (378 aa).

11 helical membrane passes run 26–46, 57–77, 103–123, 127–147, 171–191, 195–215, 225–245, 247–267, 275–295, 302–322, and 356–376; these read LFRL…TGAN, LPWL…VPLL, MGGI…TGFA, LSPT…IGWW, GIGA…ATVV, WGWV…VPMA, GLDG…GIIL, PYPD…GFLW, VFMG…IGLA, LLIV…QVLY, and IVRT…LLQW.

This sequence belongs to the glycosyltransferase 4 family. MraY subfamily. Mg(2+) serves as cofactor.

It is found in the cell inner membrane. The enzyme catalyses UDP-N-acetyl-alpha-D-muramoyl-L-alanyl-gamma-D-glutamyl-meso-2,6-diaminopimeloyl-D-alanyl-D-alanine + di-trans,octa-cis-undecaprenyl phosphate = di-trans,octa-cis-undecaprenyl diphospho-N-acetyl-alpha-D-muramoyl-L-alanyl-D-glutamyl-meso-2,6-diaminopimeloyl-D-alanyl-D-alanine + UMP. It participates in cell wall biogenesis; peptidoglycan biosynthesis. In terms of biological role, catalyzes the initial step of the lipid cycle reactions in the biosynthesis of the cell wall peptidoglycan: transfers peptidoglycan precursor phospho-MurNAc-pentapeptide from UDP-MurNAc-pentapeptide onto the lipid carrier undecaprenyl phosphate, yielding undecaprenyl-pyrophosphoryl-MurNAc-pentapeptide, known as lipid I. The polypeptide is Phospho-N-acetylmuramoyl-pentapeptide-transferase (Thermosynechococcus vestitus (strain NIES-2133 / IAM M-273 / BP-1)).